Reading from the N-terminus, the 359-residue chain is Type-1 angiotensin II receptor B (359 aa).

The Extracellular portion of the chain corresponds to 1 to 25; it reads MILNSSIEDGIKRIQDDCPKAGRHN. N-linked (GlcNAc...) asparagine glycosylation occurs at asparagine 4. The angiotensin II site is built by glutamine 15 and aspartate 17. Intrachain disulfides connect cysteine 18–cysteine 274 and cysteine 101–cysteine 180. The helical transmembrane segment at 26 to 55 threads the bilayer; sequence YIFVMIPTLYSIIFVVGIFGNSLVVIVIYF. Topologically, residues 56 to 61 are cytoplasmic; sequence YMKLKT. A helical membrane pass occupies residues 62 to 89; it reads VASVFLLNLALADLCFLLTLPLWAVYTA. Residues 90–98 are Extracellular-facing; the sequence is MEYQWPFGN. Residues 99–125 traverse the membrane as a helical segment; sequence HLCKIASASVSFNLYASVFLLTCLSID. Over 126–141 the chain is Cytoplasmic; that stretch reads RYLAIVHPMKSRLRRT. Residues 142–165 form a helical membrane-spanning segment; that stretch reads MLVAKVTCIIIWLMAGLASLPAVI. The Extracellular portion of the chain corresponds to 166–190; the sequence is HRNVYFIENTNITVCAFHYESQNST. Residue arginine 167 participates in angiotensin II binding. A glycan (N-linked (GlcNAc...) asparagine) is linked at asparagine 176. 3 residues coordinate angiotensin II: phenylalanine 182, histidine 183, and tyrosine 184. A glycan (N-linked (GlcNAc...) asparagine) is linked at asparagine 188. A helical membrane pass occupies residues 191–216; the sequence is LPIGLGLTKNILGFVFPFVIILTSYT. Angiotensin II is bound at residue lysine 199. At 217–239 the chain is on the cytoplasmic side; it reads LIWKALKKAYKIQKNTPRNDDIF. The chain crosses the membrane as a helical span at residues 240 to 268; sequence RIIMAIVLFFFFSWVPHQIFSFLDVLIQL. Residues 269-278 are Extracellular-facing; that stretch reads GVIHDCEIAD. The helical transmembrane segment at 279–304 threads the bilayer; it reads VVDTAMPITICIAYFNNCLNPLFYGF. Topologically, residues 305–359 are cytoplasmic; the sequence is LGKKFKRYFLQLLKYIPPKARSHAGLSTKMSTLSYRPSDNMSSSARKSAYCFEVE. A lipid anchor (S-palmitoyl cysteine) is attached at cysteine 355.

This sequence belongs to the G-protein coupled receptor 1 family. As to quaternary structure, interacts with MAS1. Interacts with ARRB1. Interacts with FLNA (via filamin repeat 21); increases PKA-mediated phosphorylation of FLNA. C-terminal Ser or Thr residues may be phosphorylated.

Its subcellular location is the cell membrane. In terms of biological role, receptor for angiotensin II, a vasoconstricting peptide, which acts as a key regulator of blood pressure and sodium retention by the kidney. The activated receptor in turn couples to G-alpha proteins G(q) (GNAQ, GNA11, GNA14 or GNA15) and thus activates phospholipase C and increases the cytosolic Ca(2+) concentrations, which in turn triggers cellular responses such as stimulation of protein kinase C. The sequence is that of Type-1 angiotensin II receptor B (Agtr1b) from Mus musculus (Mouse).